We begin with the raw amino-acid sequence, 342 residues long: S-adenosylmethionine:tRNA ribosyltransferase-isomerase (342 aa).

Belongs to the QueA family. In terms of assembly, monomer.

It is found in the cytoplasm. It catalyses the reaction 7-aminomethyl-7-carbaguanosine(34) in tRNA + S-adenosyl-L-methionine = epoxyqueuosine(34) in tRNA + adenine + L-methionine + 2 H(+). The protein operates within tRNA modification; tRNA-queuosine biosynthesis. Functionally, transfers and isomerizes the ribose moiety from AdoMet to the 7-aminomethyl group of 7-deazaguanine (preQ1-tRNA) to give epoxyqueuosine (oQ-tRNA). The chain is S-adenosylmethionine:tRNA ribosyltransferase-isomerase from Streptococcus pyogenes serotype M1.